A 300-amino-acid polypeptide reads, in one-letter code: Forkhead transcription factor fkh-9 (300 aa).

A DNA-binding region (fork-head) is located at residues Arg66–Arg161. Positions Lys153 to Pro208 are disordered. Over residues Lys169–Gly183 the composition is skewed to basic and acidic residues. The span at Ser187–Ser198 shows a compositional bias: low complexity.

As to expression, expressed in mechanosensory neurons.

It is found in the nucleus. Its function is as follows. Transcription factor. Binds to the regulatory elements of genes that contain the sequence motif 5'-TTGTTTCT-3'. Involved in regulating intestinal transcription of vitellogenin vit-2, acting in concert with transcription factors elt-2, mab-3 and daf-16, and also the TGF-beta/Sma/Mab pathway. Functions downstream of the insulin/IGF-1-like signaling (IIS) mediated pathway, in regeneration of axons after injury and in short-term memory, perhaps acting in neurons, and in modulation of longevity, perhaps acting non-neuronally. Plays a role in the modulation of endoplasmic reticulum (ER) homeostasis during chemical and pathogen stress, including exposure to the Gram-negative bacterium P.aeruginosa. The sequence is that of Forkhead transcription factor fkh-9 from Caenorhabditis elegans.